Consider the following 280-residue polypeptide: NAD(+) hydrolase TirS (280 aa).

A coiled-coil region spans residues 22-94 (MNKLPDEIDR…KINLQKEQSR (73 aa)). Residues 141 to 275 (IEYDVFLSHS…EIVEKIYQVI (135 aa)) enclose the TIR domain. Residues 150–151 (SS) and glutamate 180 contribute to the NAD(+) site. Glutamate 216 is a catalytic residue.

The protein localises to the secreted. The enzyme catalyses NAD(+) + H2O = ADP-D-ribose + nicotinamide + H(+). The catalysed reaction is NADP(+) + H2O = ADP-D-ribose 2'-phosphate + nicotinamide + H(+). Its function is as follows. Virulence factor that suppresses host Toll-like receptor 2 (TLR2)-mediated NF-kappa-B signaling upon infection. NAD(+) hydrolase (NADase) that catalyzes cleavage of NAD(+) into ADP-D-ribose (ADPR) and nicotinamide. Also able to hydrolyze NADP(+), but not other NAD(+)-related molecules. Able to reduce NAD(+) levels in host cells. This chain is NAD(+) hydrolase TirS, found in Staphylococcus aureus (strain MSSA476).